The chain runs to 290 residues: Light-independent protochlorophyllide reductase iron-sulfur ATP-binding protein (290 aa).

ATP is bound by residues 34–39 (GIGKST) and Lys-63. Ser-38 lines the Mg(2+) pocket. Residues Cys-119 and Cys-153 each coordinate [4Fe-4S] cluster. ATP-binding positions include 204–205 (NR) and 228–230 (PDL).

Belongs to the NifH/BchL/ChlL family. As to quaternary structure, homodimer. Protochlorophyllide reductase is composed of three subunits; BchL, BchN and BchB. It depends on [4Fe-4S] cluster as a cofactor.

It catalyses the reaction chlorophyllide a + oxidized 2[4Fe-4S]-[ferredoxin] + 2 ADP + 2 phosphate = protochlorophyllide a + reduced 2[4Fe-4S]-[ferredoxin] + 2 ATP + 2 H2O. It functions in the pathway porphyrin-containing compound metabolism; bacteriochlorophyll biosynthesis (light-independent). In terms of biological role, component of the dark-operative protochlorophyllide reductase (DPOR) that uses Mg-ATP and reduced ferredoxin to reduce ring D of protochlorophyllide (Pchlide) to form chlorophyllide a (Chlide). This reaction is light-independent. The L component serves as a unique electron donor to the NB-component of the complex, and binds Mg-ATP. This chain is Light-independent protochlorophyllide reductase iron-sulfur ATP-binding protein, found in Rhodospirillum rubrum.